The chain runs to 380 residues: Cytochrome b (380 aa).

Transmembrane regions (helical) follow at residues 34 to 54, 78 to 99, 114 to 134, and 179 to 199; these read FGSL…LLAM, WLIR…YFHI, WNTG…GYVL, and FFAL…IHLT. Positions 84 and 98 each coordinate heme b. Heme b is bound by residues His-183 and His-197. Residue His-202 coordinates a ubiquinone. 4 consecutive transmembrane segments (helical) span residues 227–247, 289–309, 321–341, and 348–368; these read LKDI…ALFS, LGGV…PFLH, ISQL…WVGS, and FIII…VLFP.

The protein belongs to the cytochrome b family. The cytochrome bc1 complex contains 11 subunits: 3 respiratory subunits (MT-CYB, CYC1 and UQCRFS1), 2 core proteins (UQCRC1 and UQCRC2) and 6 low-molecular weight proteins (UQCRH/QCR6, UQCRB/QCR7, UQCRQ/QCR8, UQCR10/QCR9, UQCR11/QCR10 and a cleavage product of UQCRFS1). This cytochrome bc1 complex then forms a dimer. It depends on heme b as a cofactor.

It localises to the mitochondrion inner membrane. In terms of biological role, component of the ubiquinol-cytochrome c reductase complex (complex III or cytochrome b-c1 complex) that is part of the mitochondrial respiratory chain. The b-c1 complex mediates electron transfer from ubiquinol to cytochrome c. Contributes to the generation of a proton gradient across the mitochondrial membrane that is then used for ATP synthesis. In Pachyptila turtur (Fairy prion), this protein is Cytochrome b (MT-CYB).